We begin with the raw amino-acid sequence, 353 residues long: Lactosylceramide 4-alpha-galactosyltransferase (353 aa).

Residues 1–22 are Cytoplasmic-facing; the sequence is MSKPPDLLLRLLRGAPRQRVCT. The chain crosses the membrane as a helical; Signal-anchor for type II membrane protein span at residues 23–43; that stretch reads LFIIGFKFTFFVSIMIYWHVV. Over 44–353 the chain is Lumenal; sequence GEPKEKGQLY…TTHEAMKMYL (310 aa). Residue Asn121 is glycosylated (N-linked (GlcNAc...) asparagine). Residues 192–194 carry the DXD motif motif; it reads DTD. N-linked (GlcNAc...) asparagine glycosylation is present at Asn203.

Belongs to the glycosyltransferase 32 family. Ubiquitous. Highly expressed in kidney, heart, spleen, liver, testis and placenta.

Its subcellular location is the golgi apparatus membrane. The enzyme catalyses a beta-D-Gal-(1-&gt;4)-beta-D-Glc-(1&lt;-&gt;1)-Cer(d18:1(4E)) + UDP-alpha-D-galactose = a globoside Gb3Cer (d18:1(4E)) + UDP + H(+). It carries out the reaction a beta-D-Gal-(1&lt;-&gt;1')-ceramide + UDP-alpha-D-galactose = alpha-D-Gal-(1-&gt;4)-beta-D-Gal-(1&lt;-&gt;1')-Cer + UDP + H(+). It participates in glycolipid biosynthesis. In terms of biological role, catalyzes the transfer of galactose from UDP-alpha-D-galactose to lactosylceramide/beta-D-galactosyl-(1-&gt;4)-beta-D-glucosyl-(1&lt;-&gt;1)-ceramide(d18:1(4E)) to produce globotriaosylceramide/globoside Gb3Cer (d18:1(4E)). Also able to transfer galactose to galactosylceramide/beta-D-Gal-(1&lt;-&gt;1')-Cer. Globoside Gb3Cer is a glycosphingolipid of the globo serie, one of the major types of neutral root structures of glycosphingolipids, that constitute a significant portion of mammalian cell membranes. Globotriaosylceramide/globoside Gb3Cer in blood and tissue cell membranes is the antigen Pk of blood histogroup P. Functionally, (Microbial infection) Globotriaosylceramide is one of the cellular ligands for bacterial verotoxins. This is Lactosylceramide 4-alpha-galactosyltransferase (A4GALT) from Homo sapiens (Human).